Here is a 21-residue protein sequence, read N- to C-terminus: Cupiennin-6b (21 aa).

A Serine amide modification is found at S21.

As to expression, expressed by the venom gland.

It is found in the secreted. The sequence is that of Cupiennin-6b from Cupiennius salei (American wandering spider).